We begin with the raw amino-acid sequence, 230 residues long: UPF0173 metal-dependent hydrolase Dshi_2788 (230 aa).

This sequence belongs to the UPF0173 family.

The chain is UPF0173 metal-dependent hydrolase Dshi_2788 from Dinoroseobacter shibae (strain DSM 16493 / NCIMB 14021 / DFL 12).